The sequence spans 257 residues: Ditrans,polycis-undecaprenyl-diphosphate synthase ((2E,6E)-farnesyl-diphosphate specific) (257 aa).

Asp24 is an active-site residue. Asp24 contacts Mg(2+). Substrate contacts are provided by residues 25 to 28 (GNGR), Trp29, Arg37, His41, and 69 to 71 (SSE). Asn72 acts as the Proton acceptor in catalysis. Substrate contacts are provided by residues Trp73, Arg75, Arg192, and 198-200 (RIS). Residue Glu211 participates in Mg(2+) binding.

Belongs to the UPP synthase family. In terms of assembly, homodimer. The cofactor is Mg(2+).

The enzyme catalyses 8 isopentenyl diphosphate + (2E,6E)-farnesyl diphosphate = di-trans,octa-cis-undecaprenyl diphosphate + 8 diphosphate. In terms of biological role, catalyzes the sequential condensation of isopentenyl diphosphate (IPP) with (2E,6E)-farnesyl diphosphate (E,E-FPP) to yield (2Z,6Z,10Z,14Z,18Z,22Z,26Z,30Z,34E,38E)-undecaprenyl diphosphate (di-trans,octa-cis-UPP). UPP is the precursor of glycosyl carrier lipid in the biosynthesis of bacterial cell wall polysaccharide components such as peptidoglycan and lipopolysaccharide. In Aliivibrio fischeri (strain ATCC 700601 / ES114) (Vibrio fischeri), this protein is Ditrans,polycis-undecaprenyl-diphosphate synthase ((2E,6E)-farnesyl-diphosphate specific).